Reading from the N-terminus, the 227-residue chain is Cleavage and polyadenylation specificity factor subunit 5 (227 aa).

Position 2 is an N-acetylserine (serine 2). Residues 2-147 are necessary for RNA-binding; sequence SVVPPNRSQT…DWVIDDCIGN (146 aa). Arginine 15 is subject to Omega-N-methylarginine. Residues lysine 23 and lysine 29 each carry the N6-acetyllysine modification. A Phosphotyrosine modification is found at tyrosine 40. Residue lysine 56 is modified to N6-acetyllysine. The 126-residue stretch at 76 to 201 folds into the Nudix hydrolase domain; that stretch reads MRRTVEGVLI…KLVAAPLFEL (126 aa). Positions 81–160 are necessary for interactions with PAPOLA and PABPN1; that stretch reads EGVLIVHEHR…PNFEPPQYPY (80 aa). The interval 102-104 is interaction with RNA; the sequence is TFF. The Nudix box signature appears at 109 to 130; the sequence is GELNPGEDEVEGLKRLMTEILG.

The protein belongs to the Nudix hydrolase family. CPSF5 subfamily. As to quaternary structure, homodimer (via N- and C-terminus); binds RNA as homodimer. Component of the cleavage factor Im (CFIm) complex which is a heterotetramer composed of two subunits of NUDT21/CPSF5 and two subunits of CPSF6 or CPSF7 or a heterodimer of CPSF6 and CPSF7. The cleavage factor Im (CFIm) complex associates with the CPSF and CSTF complexes to promote the assembly of the core mRNA 3'-processing machinery. Interacts with CPSF6 (via the RRM domain); this interaction is direct and enhances binding to RNA. Interacts with CPSF7. Interacts with FIP1L1; this interaction occurs in a RNA sequence-specific manner. Interacts with PABPN1. Interacts (via N-terminus) with PAPOLA (via C-terminus); this interaction is direct and diminished by acetylation. Interacts with SNRNP70. Interacts with VIRMA. Post-translationally, acetylated mainly by p300/CBP, recruited to the complex by CPSF6. Acetylation decreases interaction with PAPAO. Deacetylated by the class I/II HDACs, HDAC1, HDAC3 and HDAC10, and by the class III HDACs, SIRT1 and SIRT2.

It localises to the nucleus. The protein resides in the cytoplasm. In terms of biological role, component of the cleavage factor Im (CFIm) complex that functions as an activator of the pre-mRNA 3'-end cleavage and polyadenylation processing required for the maturation of pre-mRNA into functional mRNAs. CFIm contributes to the recruitment of multiprotein complexes on specific sequences on the pre-mRNA 3'-end, so called cleavage and polyadenylation signals (pA signals). Most pre-mRNAs contain multiple pA signals, resulting in alternative cleavage and polyadenylation (APA) producing mRNAs with variable 3'-end formation. The CFIm complex acts as a key regulator of cleavage and polyadenylation site choice during APA through its binding to 5'-UGUA-3' elements localized in the 3'-untranslated region (UTR) for a huge number of pre-mRNAs. NUDT21/CPSF5 activates indirectly the mRNA 3'-processing machinery by recruiting CPSF6 and/or CPSF7. Binds to 5'-UGUA-3' elements localized upstream of pA signals that act as enhancers of pre-mRNA 3'-end processing. The homodimer mediates simultaneous sequence-specific recognition of two 5'-UGUA-3' elements within the pre-mRNA. Plays a role in somatic cell fate transitions and pluripotency by regulating widespread changes in gene expression through an APA-dependent function. Binds to chromatin. Binds to, but does not hydrolyze mono- and di-adenosine nucleotides. This Bos taurus (Bovine) protein is Cleavage and polyadenylation specificity factor subunit 5 (NUDT21).